Reading from the N-terminus, the 200-residue chain is 3-isopropylmalate dehydratase small subunit (200 aa).

The protein belongs to the LeuD family. LeuD type 1 subfamily. As to quaternary structure, heterodimer of LeuC and LeuD.

It catalyses the reaction (2R,3S)-3-isopropylmalate = (2S)-2-isopropylmalate. It functions in the pathway amino-acid biosynthesis; L-leucine biosynthesis; L-leucine from 3-methyl-2-oxobutanoate: step 2/4. In terms of biological role, catalyzes the isomerization between 2-isopropylmalate and 3-isopropylmalate, via the formation of 2-isopropylmaleate. This Pseudarthrobacter chlorophenolicus (strain ATCC 700700 / DSM 12829 / CIP 107037 / JCM 12360 / KCTC 9906 / NCIMB 13794 / A6) (Arthrobacter chlorophenolicus) protein is 3-isopropylmalate dehydratase small subunit.